The following is a 340-amino-acid chain: L-threonine 3-dehydrogenase (340 aa).

Cys-38 is a binding site for Zn(2+). Active-site charge relay system residues include Thr-40 and His-43. Residues His-63, Glu-64, Cys-93, Cys-96, Cys-99, and Cys-107 each coordinate Zn(2+). Residues Ile-175, Asp-195, Arg-200, 262 to 264 (LGI), and 286 to 287 (IY) contribute to the NAD(+) site.

This sequence belongs to the zinc-containing alcohol dehydrogenase family. As to quaternary structure, homotetramer. It depends on Zn(2+) as a cofactor.

It is found in the cytoplasm. It catalyses the reaction L-threonine + NAD(+) = (2S)-2-amino-3-oxobutanoate + NADH + H(+). Its pathway is amino-acid degradation; L-threonine degradation via oxydo-reductase pathway; glycine from L-threonine: step 1/2. In terms of biological role, catalyzes the NAD(+)-dependent oxidation of L-threonine to 2-amino-3-ketobutyrate. This chain is L-threonine 3-dehydrogenase, found in Legionella pneumophila subsp. pneumophila (strain Philadelphia 1 / ATCC 33152 / DSM 7513).